Reading from the N-terminus, the 83-residue chain is Short neurotoxin OKI-01/OKI-19 (83 aa).

Residues 1–21 form the signal peptide; the sequence is MKTLLLTLVVVTIVCLDLGYT. 4 disulfide bridges follow: Cys-24–Cys-45, Cys-38–Cys-62, Cys-64–Cys-75, and Cys-76–Cys-81.

It belongs to the three-finger toxin family. Short-chain subfamily. Type I alpha-neurotoxin sub-subfamily. In terms of tissue distribution, expressed by the venom gland.

It is found in the secreted. Binds to muscle nicotinic acetylcholine receptor (nAChR) and inhibit acetylcholine from binding to the receptor, thereby impairing neuromuscular transmission. The chain is Short neurotoxin OKI-01/OKI-19 from Laticauda laticaudata (Blue-ringed sea krait).